Reading from the N-terminus, the 372-residue chain is Queuine tRNA-ribosyltransferase (372 aa).

Residue Asp-90 is the Proton acceptor of the active site. Residues 90 to 94, Asp-144, Gln-193, and Gly-220 each bind substrate; that span reads DSGGF. The interval 251-257 is RNA binding; that stretch reads GVGTPED. Residue Asp-270 is the Nucleophile of the active site. An RNA binding; important for wobble base 34 recognition region spans residues 275–279; it reads TRNAR. Zn(2+) is bound by residues Cys-308, Cys-310, Cys-313, and His-339.

The protein belongs to the queuine tRNA-ribosyltransferase family. In terms of assembly, homodimer. Within each dimer, one monomer is responsible for RNA recognition and catalysis, while the other monomer binds to the replacement base PreQ1. Zn(2+) is required as a cofactor.

The catalysed reaction is 7-aminomethyl-7-carbaguanine + guanosine(34) in tRNA = 7-aminomethyl-7-carbaguanosine(34) in tRNA + guanine. The protein operates within tRNA modification; tRNA-queuosine biosynthesis. Catalyzes the base-exchange of a guanine (G) residue with the queuine precursor 7-aminomethyl-7-deazaguanine (PreQ1) at position 34 (anticodon wobble position) in tRNAs with GU(N) anticodons (tRNA-Asp, -Asn, -His and -Tyr). Catalysis occurs through a double-displacement mechanism. The nucleophile active site attacks the C1' of nucleotide 34 to detach the guanine base from the RNA, forming a covalent enzyme-RNA intermediate. The proton acceptor active site deprotonates the incoming PreQ1, allowing a nucleophilic attack on the C1' of the ribose to form the product. After dissociation, two additional enzymatic reactions on the tRNA convert PreQ1 to queuine (Q), resulting in the hypermodified nucleoside queuosine (7-(((4,5-cis-dihydroxy-2-cyclopenten-1-yl)amino)methyl)-7-deazaguanosine). The polypeptide is Queuine tRNA-ribosyltransferase (Sulfurimonas denitrificans (strain ATCC 33889 / DSM 1251) (Thiomicrospira denitrificans (strain ATCC 33889 / DSM 1251))).